The following is a 252-amino-acid chain: Cytochrome b6-f complex iron-sulfur subunit, chloroplastic (252 aa).

A helical membrane pass occupies residues 94 to 114 (LVLAAVAPVVASAGGCYLYYF). The Rieske domain occupies 141-235 (WFKSHKKNAR…VEDDNGKILL (95 aa)). [2Fe-2S] cluster is bound by residues C181, H183, C199, and H202. A disulfide bond links C186 and C201.

Belongs to the Rieske iron-sulfur protein family. In terms of assembly, the 4 large subunits of the cytochrome b6-f complex are cytochrome b6, subunit IV (17 kDa polypeptide, petD), cytochrome f and the Rieske protein, while the 4 small subunits are petG, petL, petM and petN. The complex functions as a dimer. [2Fe-2S] cluster serves as cofactor.

The protein localises to the plastid. It is found in the chloroplast thylakoid membrane. The catalysed reaction is 2 oxidized [plastocyanin] + a plastoquinol + 2 H(+)(in) = 2 reduced [plastocyanin] + a plastoquinone + 4 H(+)(out). Component of the cytochrome b6-f complex, which mediates electron transfer between photosystem II (PSII) and photosystem I (PSI), cyclic electron flow around PSI, and state transitions. The chain is Cytochrome b6-f complex iron-sulfur subunit, chloroplastic (petC) from Bigelowiella natans (Pedinomonas minutissima).